A 280-amino-acid polypeptide reads, in one-letter code: Tobamovirus multiplication protein 2A (280 aa).

Over 1-13 (MACRGCLECLLKL) the chain is Cytoplasmic. Residues 14-34 (LNFLLAVAGLGMIGYGIYLFV) traverse the membrane as a helical segment. Residues 35–78 (EYKRVTDNSVTFDLTNGDQSYVSFGRPILMAVSLSSNIFDNLPK) are Extracellular-facing. A helical membrane pass occupies residues 79–99 (AWFIYLFIGIGVALFVISCCG). The Cytoplasmic portion of the chain corresponds to 100–113 (CVGTCSRSVCCLSC). Residues 114–134 (YSLLLILLILVELGFAAFIFF) form a helical membrane-spanning segment. At 135-162 (DNSWRDELPSDRTGNFDTIYNFLRENWK) the chain is on the extracellular side. A helical membrane pass occupies residues 163-183 (IVRWVALGAVVFEALLFLLAL). Residues 184–280 (MVRAANTPAE…NEEKGRCTIM (97 aa)) lie on the Cytoplasmic side of the membrane. Phosphoserine is present on residues Ser-196 and Ser-233. The disordered stretch occupies residues 258–280 (SESHRFQQMPAQPNEEKGRCTIM). Over residues 271–280 (NEEKGRCTIM) the composition is skewed to basic and acidic residues.

This sequence belongs to the tetraspanin (TM4SF) family. As to quaternary structure, homodimer. Constituent of tobamovirus replication complex. Interacts with TOM1. Expressed in rosette leaves.

It is found in the vacuole membrane. Functionally, necessary for the efficient intracellular multiplication of tobamoviruses, being a component of the replication complex. The polypeptide is Tobamovirus multiplication protein 2A (TOM2A) (Arabidopsis thaliana (Mouse-ear cress)).